A 565-amino-acid polypeptide reads, in one-letter code: Translation machinery-associated protein 64 (565 aa).

The region spanning 89-170 (LPIVLTHGFV…VAVKIIHHFN (82 aa)) is the PUA domain. The SWIB/MDM2 domain occupies 362 to 447 (TLYKPFNLAK…GEILHPLLTN (86 aa)). An SUI1 domain is found at 475–547 (IKIITEMKIG…SIIDHLNKLG (73 aa)).

The protein belongs to the eIF2D family. As to quaternary structure, interacts with the 40S ribosomal subunit.

This Saccharomyces cerevisiae (strain ATCC 204508 / S288c) (Baker's yeast) protein is Translation machinery-associated protein 64 (TMA64).